Reading from the N-terminus, the 1567-residue chain is Myosin-2A (1567 aa).

A Myosin N-terminal SH3-like domain is found at 4–57 (EVGTRCWYPSKEQGWIGAEVTKNDLKDGTYFMELTLEDNEVVNVETKDLTNEKD). The Myosin motor domain maps to 70–786 (ESTEDLTTLS…MLAYFEKLRS (717 aa)). 164-171 (GESGAGKT) is a binding site for ATP. The tract at residues 446–526 (FIGVLDIYGF…LGILSLLDEE (81 aa)) is actin-binding. Positions 619 to 640 (EEAKKNAASQDQKQLKKPTPIR) are disordered. IQ domains are found at residues 789–818 (MNSAIVLIQKHIRSKYYRKQYMLMKASLSL), 812–836 (MKASLSLLGAYSKGTVIRQRVEYEL), 837–859 (EQHAATLIQTMYRGYSKRSYISG), 860–884 (VISSIVKLQSRIREELEQREMQSKY), 885–907 (ESNAAISIQSRIRAFVPRKAYES), and 908–937 (KRRDTIVVQSLIRRRIAQRDFKKLKADAKS). Residues 947–1091 (KLENKVIQLT…LAHLQTSIAL (145 aa)) are a coiled coil. The segment at 1092–1567 (GTVTTNTNIV…VAQQVTVPDA (476 aa)) is non alpha-helical, tail domain. In terms of domain architecture, Dilute spans 1230 to 1505 (AQVLTTIQKV…LKYVADIVKK (276 aa)).

Belongs to the TRAFAC class myosin-kinesin ATPase superfamily. Myosin family. As to quaternary structure, homodimer. Interacts with calmodulin (CMD1) and the myosin light chain MLC1 through its IQ repeats.

In terms of biological role, myosin heavy chain that is required for the cell cycle-regulated transport of various organelles and proteins for their segregation. Functions by binding with its tail domain to receptor proteins on organelles and exerting force with its N-terminal motor domain against actin filaments, thereby transporting its cargo along polarized actin cables. The sequence is that of Myosin-2A (MYO2A) from Naumovozyma castellii (Yeast).